The chain runs to 421 residues: MGKATLAVFADSDSSNMNESFAHLHFAGGYLPSDSKGWRTIIPSLLAAVCLVGFVGNLCVIGLLLHGVWKRKPSMIHSLILNLSLADISLLLFSAPVRATAYVKGVWDLGWFVCKSSDWFTHMCMAAKSLTFVVVAKVCFMYASDPAKPVGTHNCTIWSLLGAIWVVASLLPLPEWFFSTTRHHAGVEMCLVDVPAVAAEFMSLFGKLYPLLVFCLPLLLAGFYFWRAYNQCKIRCAKTQNLRNQMRSKQLTVMLLSTAVTSALLWLPEWIAWLWVWHLKAGGPMPPQGFIALSQVLMFSISTVNPLIFLMMSEEFKAGLKGIWKWMITRKPVVTSEVQEVPAGNIETLPGKAPSPETQTCIPDTDRCGSPDSSKETTDKVMVPILPDVEQFWHERDVGPSAQDNDPIPWEHEGQETKGCN.

Over 1-44 (MGKATLAVFADSDSSNMNESFAHLHFAGGYLPSDSKGWRTIIPS) the chain is Extracellular. N-linked (GlcNAc...) asparagine glycosylation occurs at asparagine 18. Residues 45 to 65 (LLAAVCLVGFVGNLCVIGLLL) form a helical membrane-spanning segment. Residues 66–74 (HGVWKRKPS) lie on the Cytoplasmic side of the membrane. The helical transmembrane segment at 75-95 (MIHSLILNLSLADISLLLFSA) threads the bilayer. At 96-122 (PVRATAYVKGVWDLGWFVCKSSDWFTH) the chain is on the extracellular side. Cysteine 114 and cysteine 190 are joined by a disulfide. Residues 123–143 (MCMAAKSLTFVVVAKVCFMYA) form a helical membrane-spanning segment. The Cytoplasmic segment spans residues 144–156 (SDPAKPVGTHNCT). A helical membrane pass occupies residues 157 to 177 (IWSLLGAIWVVASLLPLPEWF). Topologically, residues 178–204 (FSTTRHHAGVEMCLVDVPAVAAEFMSL) are extracellular. A helical transmembrane segment spans residues 205-225 (FGKLYPLLVFCLPLLLAGFYF). The Cytoplasmic segment spans residues 226–258 (WRAYNQCKIRCAKTQNLRNQMRSKQLTVMLLST). A helical transmembrane segment spans residues 259–279 (AVTSALLWLPEWIAWLWVWHL). Residues 280 to 289 (KAGGPMPPQG) lie on the Extracellular side of the membrane. Residues 290 to 310 (FIALSQVLMFSISTVNPLIFL) form a helical membrane-spanning segment. Residues 311–421 (MMSEEFKAGL…HEGQETKGCN (111 aa)) are Cytoplasmic-facing. Disordered regions lie at residues 346–381 (IETL…TDKV) and 394–421 (HERD…KGCN). Basic and acidic residues-rich tracts occupy residues 364–379 (DTDR…ETTD) and 409–421 (PWEH…KGCN).

The protein belongs to the G-protein coupled receptor 1 family. Exclusively expressed in neurons of the habenular complex. The expression is particularly prominent in the medial habenular nucleus, whereas the lateral habenular nucleus exhibited a lower level of expression.

Its subcellular location is the cell membrane. Orphan receptor. The chain is Probable G-protein coupled receptor 151 (Gpr151) from Rattus norvegicus (Rat).